The following is a 476-amino-acid chain: Neuropeptide receptor 18 (476 aa).

Topologically, residues 1–61 (MSSFYNEAKF…LSNHDNSSLM (61 aa)) are extracellular. N-linked (GlcNAc...) asparagine glycosylation is found at N43 and N57. Residues 62-82 (LIAGFYALLFMFGTCGNAAIL) traverse the membrane as a helical segment. At 83 to 102 (AVVHHVKGQDPRSRHNTTLT) the chain is on the cytoplasmic side. A helical membrane pass occupies residues 103–123 (YICILSIVDFLSMLPIPMTII). Over 124 to 139 (DQILGFWMFDTFACKL) the chain is Extracellular. An intrachain disulfide couples C137 to C228. The chain crosses the membrane as a helical span at residues 140–160 (FRLLEHIGKIFSTFILVAFSI). The Cytoplasmic portion of the chain corresponds to 161 to 179 (DRYCAVCHPLQVRVRNQRT). Residues 180–200 (VFVFLGIMFFVTCVMLSPILL) traverse the membrane as a helical segment. The Extracellular segment spans residues 201–236 (YAHSKELVMHEKVDLDQEVITRMHLYKCVDDLGREL). The helical transmembrane segment at 237 to 257 (FVVFTLYSFVLAYLMPLLFMI) threads the bilayer. The Cytoplasmic portion of the chain corresponds to 258 to 291 (YFYYEMLIRLFKQANVIKQTLVGRRSGGEEKKLT). The helical transmembrane segment at 292–312 (IPVGHIAIYTLAICSFHFICW) threads the bilayer. The Extracellular portion of the chain corresponds to 313–334 (TPYWISILYSLYEELYQDTKST). The helical transmembrane segment at 335–355 (ASPPTYAFIYFMYGVHALPYI) threads the bilayer. The Cytoplasmic portion of the chain corresponds to 356 to 476 (NSASNFILYG…ITPDTESVIL (121 aa)).

This sequence belongs to the G-protein coupled receptor 1 family. Expressed in sensory neurons including ASER.

The protein localises to the cell membrane. Its function is as follows. Probable receptor for neuropeptide ligand nlp-9 that plays a role in octopamine signaling and specifically, the octapamine inhibition of aversion responses in olfactory sensory neurons. In AWB olfactory sensory neurons, required for the detection of preferred food sources. This chain is Neuropeptide receptor 18, found in Caenorhabditis elegans.